A 125-amino-acid chain; its full sequence is MQMGRPTLLPCLLLLLVLSTQACFIRNCPEGGKRDVHMIQPTKPCMNCSFGQCVGPRVCCGAGRCEIGSTEADRCEEENEDPVPCKVLGQHCVLNNPGNVNGNCVDGGIGICCVDDTCAIHRRCD.

Residues 1-22 (MQMGRPTLLPCLLLLLVLSTQA) form the signal peptide. Cys-23 and Cys-28 are oxidised to a cystine. Gly-31 carries the glycine amide modification. A propeptide spanning residues 32 to 39 (GKRDVHMI) is cleaved from the precursor. 7 disulfides stabilise this stretch: Cys-45/Cys-85, Cys-48/Cys-59, Cys-53/Cys-75, Cys-60/Cys-65, Cys-92/Cys-112, Cys-104/Cys-124, and Cys-113/Cys-118.

It belongs to the vasopressin/oxytocin family. Expressed by the venom gland.

The protein resides in the secreted. Functionally, targets vasopressin-oxytocin related receptors. This chain is Conopressin-conophysin, isoform 1, found in Conus monile (Necklace cone).